The following is a 116-amino-acid chain: Large ribosomal subunit protein uL24c (116 aa).

Belongs to the universal ribosomal protein uL24 family. As to quaternary structure, part of the 50S ribosomal subunit.

The protein resides in the plastid. It localises to the chloroplast. In terms of biological role, one of two assembly initiator proteins, it binds directly to the 5'-end of the 23S rRNA, where it nucleates assembly of the 50S subunit. The polypeptide is Large ribosomal subunit protein uL24c (rpl24) (Pyropia yezoensis (Susabi-nori)).